Reading from the N-terminus, the 1411-residue chain is Uveal autoantigen with coiled-coil domains and ankyrin repeats (1411 aa).

Met1 is modified (N-acetylmethionine). A disordered region spans residues Met1–Ser30. Residues Ala13–Ser30 are compositionally biased toward low complexity. ANK repeat units follow at residues Glu69–Thr98, Ala102–His131, Gln135–Ala164, Asp168–Ser197, Gln201–Leu230, and Leu234–Lys263. Positions Lys263–Phe301 are disordered. The residue at position 280 (Ser280) is a Phosphoserine. Over residues Thr282–Phe301 the composition is skewed to basic and acidic residues. 3 coiled-coil regions span residues His299–Lys379, Ser442–Leu624, and Val652–Arg1380. Residues Gly1006–Glu1031 are disordered.

In terms of assembly, component of the apoptosome complex, composed of APAF1, pro-caspase-9 and UACA. In the complex, it probably interacts directly with APAF1. Interacts with LGALS3, ARF6 and ACTB. Interacts with RAB39A. In terms of tissue distribution, highly expressed in heart, liver, kidney and testis. Weakly expressed in lung and skeletal muscle. Not expressed in brain and spleen.

It is found in the nucleus. The protein localises to the cytoplasm. Its subcellular location is the cytoskeleton. Functionally, regulates APAF1 expression and plays an important role in the regulation of stress-induced apoptosis. Promotes apoptosis by regulating three pathways, apoptosome up-regulation, LGALS3/galectin-3 down-regulation and NF-kappa-B inactivation. Regulates the redistribution of APAF1 into the nucleus after proapoptotic stress. Down-regulates the expression of LGALS3 by inhibiting NFKB1. Its function is as follows. Modulates isoactin dynamics to regulate the morphological alterations required for cell growth and motility. Interaction with ARF6 may modulate cell shape and motility after injury. May be involved in multiple neurite formation. The sequence is that of Uveal autoantigen with coiled-coil domains and ankyrin repeats (Uaca) from Mus musculus (Mouse).